The primary structure comprises 319 residues: Cytochrome c biogenesis protein CcsA (319 aa).

Helical transmembrane passes span 9 to 29 (ILTH…LITL), 44 to 64 (GVIG…AYSG), 71 to 91 (LYES…FPYF), 143 to 163 (MVLG…LLVI), 225 to 245 (IISL…VWAN), 259 to 273 (TWAF…IYLH), and 286 to 306 (AIVA…VNLL).

Belongs to the CcmF/CycK/Ccl1/NrfE/CcsA family. As to quaternary structure, may interact with Ccs1.

It localises to the plastid. The protein localises to the chloroplast thylakoid membrane. Functionally, required during biogenesis of c-type cytochromes (cytochrome c6 and cytochrome f) at the step of heme attachment. This is Cytochrome c biogenesis protein CcsA from Oenothera glazioviana (Large-flowered evening primrose).